A 120-amino-acid chain; its full sequence is Cytochrome c2 iso-1 (120 aa).

Q1 carries the post-translational modification Pyrrolidone carboxylic acid. Residues C15, C18, H19, and M98 each contribute to the heme c site.

It belongs to the cytochrome c family. Post-translationally, binds 1 heme c group covalently per subunit.

Cytochrome c2 is found mainly in purple, non-sulfur, photosynthetic bacteria where it functions as the electron donor to the oxidized bacteriochlorophyll in the photophosphorylation pathway. However, it may also have a role in the respiratory chain and is found in some non-photosynthetic bacteria. The sequence is that of Cytochrome c2 iso-1 from Rhodospirillum centenum (Rhodocista centenaria).